A 138-amino-acid polypeptide reads, in one-letter code: Large ribosomal subunit protein uL13 (138 aa).

It belongs to the universal ribosomal protein uL13 family. As to quaternary structure, part of the 50S ribosomal subunit.

Functionally, this protein is one of the early assembly proteins of the 50S ribosomal subunit, although it is not seen to bind rRNA by itself. It is important during the early stages of 50S assembly. The chain is Large ribosomal subunit protein uL13 from Picrophilus torridus (strain ATCC 700027 / DSM 9790 / JCM 10055 / NBRC 100828 / KAW 2/3).